The primary structure comprises 120 residues: Phosphoribosyl-AMP cyclohydrolase (120 aa).

Mg(2+) is bound at residue Asp-75. Residue Cys-76 participates in Zn(2+) binding. Mg(2+) contacts are provided by Asp-77 and Asp-79. Cys-92 and Cys-99 together coordinate Zn(2+).

Belongs to the PRA-CH family. As to quaternary structure, homodimer. Mg(2+) serves as cofactor. It depends on Zn(2+) as a cofactor.

The protein resides in the cytoplasm. The catalysed reaction is 1-(5-phospho-beta-D-ribosyl)-5'-AMP + H2O = 1-(5-phospho-beta-D-ribosyl)-5-[(5-phospho-beta-D-ribosylamino)methylideneamino]imidazole-4-carboxamide. The protein operates within amino-acid biosynthesis; L-histidine biosynthesis; L-histidine from 5-phospho-alpha-D-ribose 1-diphosphate: step 3/9. Catalyzes the hydrolysis of the adenine ring of phosphoribosyl-AMP. The chain is Phosphoribosyl-AMP cyclohydrolase from Haloarcula marismortui (strain ATCC 43049 / DSM 3752 / JCM 8966 / VKM B-1809) (Halobacterium marismortui).